The primary structure comprises 261 residues: Zinc finger protein 664 (261 aa).

9 consecutive C2H2-type zinc fingers follow at residues 3–25, 31–53, 59–81, 87–109, 115–137, 143–165, 171–193, 199–221, and 227–249; these read YKCP…QKIH, HKCD…WRDH, YKCD…KKIH, YKCY…MRVH, YVCS…QRVH, FKCE…QRVH, YKCY…QRVH, YRCC…QRVH, and FKCD…QRVH. Residue Lys-257 forms a Glycyl lysine isopeptide (Lys-Gly) (interchain with G-Cter in SUMO2) linkage.

This sequence belongs to the krueppel C2H2-type zinc-finger protein family.

Its subcellular location is the nucleus. Its function is as follows. May be involved in transcriptional regulation. The protein is Zinc finger protein 664 (ZNF664) of Pongo abelii (Sumatran orangutan).